A 269-amino-acid polypeptide reads, in one-letter code: MIRTLLLSTLVAGALSCGVSTYAPDMSRMLGGEEARPNSWPWQVSLQYSSNGQWYHTCGGSLIANSWVLTAAHCISSSGIYRVMLGQHNLYVAESGSLAVSVSKIVVHKDWNSDQVSKGNDIALLKLANPVSLTDKIQLACLPPAGTILPNNYPCYVTGWGRLQTNGALPDDLKQGQLLVVDYATCSSSGWWGSTVKTNMICAGGDGVICTCNGDSGGPLNCQASDGRWEVHGIGSLTSVLGCNYYYKPSIFTRVSNYNDWINSVIANN.

Positions Met1 to Ser16 are cleaved as a signal peptide. Positions Cys17–Arg28 are cleaved as a propeptide — activation peptide. The region spanning Met29–Ala267 is the Peptidase S1 domain. A disulfide bond links Cys58 and Cys74. Catalysis depends on charge relay system residues His73 and Asp121. 3 disulfides stabilise this stretch: Cys155–Cys222, Cys186–Cys202, and Cys212–Cys243. Ser216 serves as the catalytic Charge relay system.

This sequence belongs to the peptidase S1 family. Elastase subfamily. As to expression, pancreas.

It is found in the secreted. It carries out the reaction Preferential cleavage: Leu-|-Xaa, Met-|-Xaa and Phe-|-Xaa. Hydrolyzes elastin.. Its function is as follows. Acts upon elastin. This chain is Chymotrypsin-like elastase family member 2B (CELA2B), found in Homo sapiens (Human).